The primary structure comprises 364 residues: Histidinol-phosphate aminotransferase (364 aa).

Lysine 226 bears the N6-(pyridoxal phosphate)lysine mark.

The protein belongs to the class-II pyridoxal-phosphate-dependent aminotransferase family. Histidinol-phosphate aminotransferase subfamily. In terms of assembly, homodimer. Requires pyridoxal 5'-phosphate as cofactor.

It carries out the reaction L-histidinol phosphate + 2-oxoglutarate = 3-(imidazol-4-yl)-2-oxopropyl phosphate + L-glutamate. The protein operates within amino-acid biosynthesis; L-histidine biosynthesis; L-histidine from 5-phospho-alpha-D-ribose 1-diphosphate: step 7/9. This is Histidinol-phosphate aminotransferase from Campylobacter jejuni subsp. jejuni serotype O:23/36 (strain 81-176).